We begin with the raw amino-acid sequence, 864 residues long: Leucine--tRNA ligase (864 aa).

A 'HIGH' region motif is present at residues 42–52 (PYPSGKLHMGH). The 'KMSKS' region motif lies at 624–628 (KMSKS). Lys627 contributes to the ATP binding site.

Belongs to the class-I aminoacyl-tRNA synthetase family.

The protein localises to the cytoplasm. The catalysed reaction is tRNA(Leu) + L-leucine + ATP = L-leucyl-tRNA(Leu) + AMP + diphosphate. This is Leucine--tRNA ligase from Burkholderia ambifaria (strain MC40-6).